The following is a 235-amino-acid chain: Probable transcriptional regulatory protein CFF8240_0424 (235 aa).

Belongs to the TACO1 family.

The protein localises to the cytoplasm. This Campylobacter fetus subsp. fetus (strain 82-40) protein is Probable transcriptional regulatory protein CFF8240_0424.